We begin with the raw amino-acid sequence, 1308 residues long: MDPSGSRGRPTWVLAGGLLAVALALGGRGCLGASSRPRWRPLGAQPPRDPQVAPRSGPGLRIPPGRSGAGPESSTQDLPCMIWPKVECCHFKTAVEAPLGMKLDKKMEVFIPLSTSAASSGPWAHSLFAFIPSWPKKNLFKRESPITHRLYGDISREVQGTSENGVIFQKCALVSGSSEAQTARIWLLVNNTKTTSSANLSELLLLDSIAGLTIWDSVGNRTSEGFQAFSKKFLQVGDAFAVSYAATLQAGDLGNGESLKLPAQLTFQSSSRNRTQLKVLFSITAEENVTVLPHHGLHAAGFFIAFLLSLVLTWAALFLMVRYQCLKGNMLTRHRVWQYESKLEPLPFTSADGVNEDLSLNDQMIDILSSEDPGSMLQALEELEIATLNRADADLEACRTQISKDIIALLLKNLTSSGHLSPQVERKMSAVFKKQFLLLENEIQEEYDRKMVALTAECDLETRKKMENQYQREMMAMEEAEELLKRAGERSAVECSNLLRTLHGLEQEHLRKSLALQQEEDFAKAHRQLAVFQRNELHSIFFTQIKSAIFKGELKPEAAKMLLQNYSKIQENVEELMDFFQASKRYHLSKRFGHREYLVQNLQSSETRVQGLLSTAAAQLTHLIQKHERAGYLDEDQMEMLLERAQTEVFSIKQKLDNDLKQEKKKLHQKLITKRRRELLQKHREQRREQASVGEAFRTVEDAGQYLHQKRSLMEEHGATLEELQERLDQAALDDLRTLTLSLFEKATDELRRLQNSAMTQELLKRGVPWLFLQQILEEHGKEMAARAEQLEGEERDRDQEGVQSVRQRLKDDAPEAVTEEQAELRRWEHLIFMKLCSSVFSLSEEELLRMRQEVHGCFAQMDRSLALPKIRARVLLQQFQTAWREAEFVKLDQAVAAPELQQQSKVRKSRSKSKSKGELLKKCIEDKIHLCEEQASEDLVEKVRGELLRERVQRMEAQEGGFAQSLVALQFQKASRVTETLSAYTALLSIQDLLLEELSASEMLTKSACTQILESHSRELQELERKLEDQLVQQEAAQQQQALASWQQWVADGPGILNEPGEVDSERQVSTVLHQALSKSQTLLEQHQQCLREEQQNSVVLEDLLENMEADTFATLCSQELRLASYLARMAMVPGATLRRLLSVVLPTASQPQLLALLDSATERHVDHAAESDGGAEQADVGRRRKHQSWWQALDGKLRGDLISRGLEKMLWARKRKQSILKKTCLPLRERMIFSGKGSWPHLSLEPIGELAPVPIVGAETIDLLNTGEKLFIFRNPKEPEISLHVPPRKKKNFLNAKKAMRALGMD.

A signal peptide spans 1 to 26 (MDPSGSRGRPTWVLAGGLLAVALALG). Topologically, residues 27–300 (GRGCLGASSR…VLPHHGLHAA (274 aa)) are extracellular. Residues 36–76 (RPRWRPLGAQPPRDPQVAPRSGPGLRIPPGRSGAGPESSTQ) are disordered. The N-linked (GlcNAc...) asparagine glycan is linked to Asn220. A helical membrane pass occupies residues 301-321 (GFFIAFLLSLVLTWAALFLMV). At 322–1308 (RYQCLKGNML…KKAMRALGMD (987 aa)) the chain is on the cytoplasmic side. Coiled coils occupy residues 455–578 (TAEC…ELMD), 636–800 (DQME…DRDQ), and 1001–1113 (ASEM…EADT). Residues 784 to 801 (MAARAEQLEGEERDRDQE) show a composition bias toward basic and acidic residues. The disordered stretch occupies residues 784-816 (MAARAEQLEGEERDRDQEGVQSVRQRLKDDAPE).

As to quaternary structure, component of the EvC complex composed of EFCAB7, IQCE, EVC2 and EVC; built from two subcomplexes, EVC2:EVC and EFCAB7:IQCE. Interacts with EVC. Interacts (via N-terminal end) with EFCAB7. Interacts (via N-terminal end) with IQCE. As to expression, found in the heart, placenta, lung, liver, skeletal muscle, kidney and pancreas.

The protein resides in the cell membrane. Its subcellular location is the cytoplasm. It is found in the cytoskeleton. The protein localises to the cilium basal body. It localises to the cell projection. The protein resides in the cilium. Its subcellular location is the cilium membrane. It is found in the nucleus. In terms of biological role, component of the EvC complex that positively regulates ciliary Hedgehog (Hh) signaling. Plays a critical role in bone formation and skeletal development. May be involved in early embryonic morphogenesis. This chain is Limbin (EVC2), found in Homo sapiens (Human).